The following is a 505-amino-acid chain: Apolipoprotein N-acyltransferase (505 aa).

7 consecutive transmembrane segments (helical) span residues 6-26, 29-49, 53-73, 80-100, 119-139, 152-172, and 189-209; these read PSIL…CLAF, FDIW…ATLV, TAML…VQWV, FGGV…SYLG, FVLA…FTGF, PFAQ…VILL, and TFTK…LQFV. The 247-residue stretch at 223–469 folds into the CN hydrolase domain; the sequence is IQANIEQQLK…TNTLTAEIAT (247 aa). Catalysis depends on E263, which acts as the Proton acceptor. The active site involves K328. Residue C379 is the Nucleophile of the active site. Residues 475–495 form a helical membrane-spanning segment; it reads LFGQFGHWLIYSLSFICVAFG.

This sequence belongs to the CN hydrolase family. Apolipoprotein N-acyltransferase subfamily.

The protein localises to the cell inner membrane. The enzyme catalyses N-terminal S-1,2-diacyl-sn-glyceryl-L-cysteinyl-[lipoprotein] + a glycerophospholipid = N-acyl-S-1,2-diacyl-sn-glyceryl-L-cysteinyl-[lipoprotein] + a 2-acyl-sn-glycero-3-phospholipid + H(+). It participates in protein modification; lipoprotein biosynthesis (N-acyl transfer). In terms of biological role, catalyzes the phospholipid dependent N-acylation of the N-terminal cysteine of apolipoprotein, the last step in lipoprotein maturation. The polypeptide is Apolipoprotein N-acyltransferase (Haemophilus ducreyi (strain 35000HP / ATCC 700724)).